The sequence spans 366 residues: PTI1-like tyrosine-protein kinase 2 (366 aa).

Residues 8–23 (GDKKGDSDLSNEEVHL) are compositionally biased toward basic and acidic residues. The tract at residues 8–50 (GDKKGDSDLSNEEVHLKSPWQNSEANQKNQKPQAVVKPEAQKE) is disordered. The segment covering 26–39 (PWQNSEANQKNQKP) has biased composition (polar residues). The region spanning 71–353 (FGSKSLIGEG…IVVKALQPLL (283 aa)) is the Protein kinase domain. ATP contacts are provided by residues 77 to 85 (IGEGSYGRV) and lysine 99. The active-site Proton acceptor is aspartate 203.

The protein belongs to the protein kinase superfamily. Tyr protein kinase family. As to quaternary structure, interacts with OXI1. Post-translationally, autophosphorylated and phosphorylated by OXI1.

The enzyme catalyses L-tyrosyl-[protein] + ATP = O-phospho-L-tyrosyl-[protein] + ADP + H(+). Its activity is regulated as follows. Strongly activated in response to phosphatidic acid (PA) and xylanase in a OXI1- and PDK1-dependent manner, and, to a lesser extent, by hydrogen peroxide and flagellin in a OXI1-dependent manner. Functionally, probable tyrosine-protein kinase involved in oxidative burst-mediated signaling leading to specific genes expression. This Arabidopsis thaliana (Mouse-ear cress) protein is PTI1-like tyrosine-protein kinase 2 (PTI12).